The sequence spans 478 residues: Cysteine protease ATG4B (478 aa).

The span at 1–15 (MTSLPDRGVSSSSSD) shows a compositional bias: polar residues. Positions 1 to 31 (MTSLPDRGVSSSSSDPLCEGNIAPCSSSSEQ) are disordered. Cysteine 164 serves as the catalytic Nucleophile. Active-site residues include aspartate 361 and histidine 363.

It belongs to the peptidase C54 family. Interacts with ATG8.

It localises to the cytoplasm. The enzyme catalyses [protein]-C-terminal L-amino acid-glycyl-phosphatidylethanolamide + H2O = [protein]-C-terminal L-amino acid-glycine + a 1,2-diacyl-sn-glycero-3-phosphoethanolamine. Cysteine protease that plays a key role in autophagy by mediating both proteolytic activation and delipidation of ATG8 family proteins. The protease activity is required for proteolytic activation of ATG8 family proteins: cleaves the C-terminal amino acid of ATG8 proteins to reveal a C-terminal glycine. Exposure of the glycine at the C-terminus is essential for ATG8 proteins conjugation to phosphatidylethanolamine (PE) and insertion to membranes, which is necessary for autophagy. In addition to the protease activity, also mediates delipidation of PE-conjugated ATG8 proteins. The protein is Cysteine protease ATG4B (ATG4B) of Oryza sativa subsp. japonica (Rice).